A 742-amino-acid polypeptide reads, in one-letter code: Collectin-12 (742 aa).

The Cytoplasmic segment spans residues 1–37; that stretch reads MKDDFAEEEEVQSFGYKRFGIQEGTQCTKCKNNWALK. A helical; Signal-anchor for type II membrane protein membrane pass occupies residues 38–58; that stretch reads FSIILLYILCALLTITVAILG. Residues 59–742 are Extracellular-facing; sequence YKVVEKMDNV…DRETVLSSAL (684 aa). N67 carries an N-linked (GlcNAc...) asparagine glycan. Positions 73 to 141 form a coiled coil; it reads ETSRQTYDDK…NKDTLEKLQA (69 aa). N159, N168, and N271 each carry an N-linked (GlcNAc...) asparagine glycan. A coiled-coil region spans residues 215-328; sequence QQRNLITNLQ…KDAENRTAIK (114 aa). The tract at residues 439-608 is disordered; it reads TILQGPPGPR…TPAPEDNGCP (170 aa). Collagen-like domains follow at residues 443 to 472, 473 to 529, and 530 to 589; these read GPPGPRGPRGDRGSQGPPGPTGNKGQKGEK, GEPG…PGPP, and GPPG…SGAV. 2 stretches are compositionally biased toward low complexity: residues 502 to 525 and 534 to 556; these read KGSQGPKGSRGSPGKPGPQGSSGD and KEGLPGPQGPPGFQGLQGTVGEP. A compositionally biased stretch (pro residues) spans 571 to 585; that stretch reads PGMPGPKGPPGPPGP. Intrachain disulfides connect C607–C618, C635–C730, and C708–C722. A C-type lectin domain is found at 614–731; sequence FTDKCYYFSV…CEDVNNFICE (118 aa). Positions 644, 646, 650, 670, and 674 each coordinate Ca(2+). Residues K691, Q694, and D696 each coordinate a carbohydrate. Residues Q694, D696, N697, E706, D707, N718, D719, and E731 each contribute to the Ca(2+) site. E706 provides a ligand contact to a carbohydrate. Residues N718 and D719 each coordinate a carbohydrate.

The extracellular domain forms a stable trimer. The extracellular domain interacts with fibrillar amyloid-beta peptide. In terms of tissue distribution, expressed in perivascular macrophages. Expressed in plaques-surrounding reactive astrocytes and in perivascular astrocytes associated with cerebral amyloid angiopathy (CAA) in the temporal cortex of Alzheimer patient (at protein level). Strongly expressed in placenta. Moderately expressed in heart, skeletal muscle, small intestine and lung. Weakly expressed in brain, colon, thymus and kidney. Expressed in nurse-like cells. Expressed in reactive astrocytes and vascular/perivascular cells in the brain of Alzheimer patient.

Its subcellular location is the membrane. In terms of biological role, scavenger receptor that displays several functions associated with host defense. Promotes binding and phagocytosis of Gram-positive, Gram-negative bacteria and yeast. Mediates the recognition, internalization and degradation of oxidatively modified low density lipoprotein (oxLDL) by vascular endothelial cells. Binds to several carbohydrates including Gal-type ligands, D-galactose, L- and D-fucose, GalNAc, T and Tn antigens in a calcium-dependent manner and internalizes specifically GalNAc in nurse-like cells. Also binds to sialyl Lewis X or a trisaccharide and asialo-orosomucoid (ASOR). May also play a role in the clearance of amyloid-beta in Alzheimer disease. The sequence is that of Collectin-12 (COLEC12) from Homo sapiens (Human).